We begin with the raw amino-acid sequence, 242 residues long: Ferritin, mitochondrial (242 aa).

The transit peptide at 1-49 (MLSCFRLLSRHISPSLASLRPVRCCFALPLRWAPGRPLDPRQIAPRRPL) directs the protein to the mitochondrion. The span at 47-58 (RPLAAAASSRDP) shows a compositional bias: low complexity. The interval 47 to 71 (RPLAAAASSRDPTGPAAGPSRVRQN) is disordered. The 150-residue stretch at 70 to 219 (QNFHPDSEAA…DHVHNLVKMG (150 aa)) folds into the Ferritin-like diiron domain. Residues Glu87, Glu122, His125, Glu167, and Gln201 each coordinate Fe cation.

It belongs to the ferritin family. In terms of assembly, homooligomer of 24 subunits. The functional molecule is roughly spherical and contains a central cavity into which the polymeric mineral iron core is deposited. As to expression, detected in testis and erythroleukemia. Expression is very low or not detectable in brain, colon, heart, kidney, liver, lung, muscle, placental, spleen and small intestine.

It is found in the mitochondrion. It carries out the reaction 4 Fe(2+) + O2 + 4 H(+) = 4 Fe(3+) + 2 H2O. Catalyzes the oxidation of ferrous iron(II) to ferric iron(III) and stores iron in a soluble, non-toxic, readily available form. Important for iron homeostasis. Iron is taken up in the ferrous form and deposited as ferric hydroxides after oxidation. This Homo sapiens (Human) protein is Ferritin, mitochondrial.